The chain runs to 376 residues: Chaperone protein DnaJ (376 aa).

The J domain maps to 5–72 (DFYEVLGVPK…QKRAAYDQYG (68 aa)). The CR-type zinc-finger motif lies at 136–214 (GKEAQIRIPS…CHGQGRVKKQ (79 aa)). Residues C149, C152, C166, C169, C188, C191, C202, and C205 each contribute to the Zn(2+) site. CXXCXGXG motif repeat units follow at residues 149–156 (CETCHGSG), 166–173 (CGTCQGSG), 188–195 (CPHCRGTG), and 202–209 (CTACHGQG). Disordered regions lie at residues 227–246 (DGMR…GGPP) and 354–376 (KKGG…SFFS). Gly residues predominate over residues 237–246 (GEPGTNGGPP). The segment covering 367 to 376 (WTDRLKSFFS) has biased composition (basic and acidic residues).

This sequence belongs to the DnaJ family. As to quaternary structure, homodimer. The cofactor is Zn(2+).

Its subcellular location is the cytoplasm. Participates actively in the response to hyperosmotic and heat shock by preventing the aggregation of stress-denatured proteins and by disaggregating proteins, also in an autonomous, DnaK-independent fashion. Unfolded proteins bind initially to DnaJ; upon interaction with the DnaJ-bound protein, DnaK hydrolyzes its bound ATP, resulting in the formation of a stable complex. GrpE releases ADP from DnaK; ATP binding to DnaK triggers the release of the substrate protein, thus completing the reaction cycle. Several rounds of ATP-dependent interactions between DnaJ, DnaK and GrpE are required for fully efficient folding. Also involved, together with DnaK and GrpE, in the DNA replication of plasmids through activation of initiation proteins. This Acidovorax ebreus (strain TPSY) (Diaphorobacter sp. (strain TPSY)) protein is Chaperone protein DnaJ.